The chain runs to 344 residues: Protein-glutamate methylesterase/protein-glutamine glutaminase (344 aa).

The region spanning 7–124 (RVLVVDDSAF…SLTFRQVAPE (118 aa)) is the Response regulatory domain. D58 bears the 4-aspartylphosphate mark. Residues 154 to 344 (PAVSGKIVVI…KIPEKLIELV (191 aa)) form the CheB-type methylesterase domain. Catalysis depends on residues S166, H193, and D289.

The protein belongs to the CheB family. Post-translationally, phosphorylated by CheA. Phosphorylation of the N-terminal regulatory domain activates the methylesterase activity.

The protein localises to the cytoplasm. It catalyses the reaction [protein]-L-glutamate 5-O-methyl ester + H2O = L-glutamyl-[protein] + methanol + H(+). The catalysed reaction is L-glutaminyl-[protein] + H2O = L-glutamyl-[protein] + NH4(+). In terms of biological role, involved in chemotaxis. Part of a chemotaxis signal transduction system that modulates chemotaxis in response to various stimuli. Catalyzes the demethylation of specific methylglutamate residues introduced into the chemoreceptors (methyl-accepting chemotaxis proteins or MCP) by CheR. Also mediates the irreversible deamidation of specific glutamine residues to glutamic acid. This chain is Protein-glutamate methylesterase/protein-glutamine glutaminase, found in Thermotoga maritima (strain ATCC 43589 / DSM 3109 / JCM 10099 / NBRC 100826 / MSB8).